Reading from the N-terminus, the 85-residue chain is NAD(P)H-quinone oxidoreductase subunit L (85 aa).

2 consecutive transmembrane segments (helical) span residues isoleucine 17–valine 37 and alanine 54–leucine 74.

Belongs to the complex I NdhL subunit family. As to quaternary structure, NDH-1 can be composed of about 15 different subunits; different subcomplexes with different compositions have been identified which probably have different functions.

Its subcellular location is the cellular thylakoid membrane. The catalysed reaction is a plastoquinone + NADH + (n+1) H(+)(in) = a plastoquinol + NAD(+) + n H(+)(out). It carries out the reaction a plastoquinone + NADPH + (n+1) H(+)(in) = a plastoquinol + NADP(+) + n H(+)(out). Functionally, NDH-1 shuttles electrons from an unknown electron donor, via FMN and iron-sulfur (Fe-S) centers, to quinones in the respiratory and/or the photosynthetic chain. The immediate electron acceptor for the enzyme in this species is believed to be plastoquinone. Couples the redox reaction to proton translocation, and thus conserves the redox energy in a proton gradient. Cyanobacterial NDH-1 also plays a role in inorganic carbon-concentration. The protein is NAD(P)H-quinone oxidoreductase subunit L of Crocosphaera subtropica (strain ATCC 51142 / BH68) (Cyanothece sp. (strain ATCC 51142)).